Here is a 139-residue protein sequence, read N- to C-terminus: Phosphoribosyl-AMP cyclohydrolase (139 aa).

A Mg(2+)-binding site is contributed by Asp-91. Position 92 (Cys-92) interacts with Zn(2+). The Mg(2+) site is built by Asp-93 and Asp-95. Zn(2+) is bound by residues Cys-110 and Cys-117.

Belongs to the PRA-CH family. As to quaternary structure, homodimer. Requires Mg(2+) as cofactor. Zn(2+) is required as a cofactor.

Its subcellular location is the cytoplasm. It carries out the reaction 1-(5-phospho-beta-D-ribosyl)-5'-AMP + H2O = 1-(5-phospho-beta-D-ribosyl)-5-[(5-phospho-beta-D-ribosylamino)methylideneamino]imidazole-4-carboxamide. The protein operates within amino-acid biosynthesis; L-histidine biosynthesis; L-histidine from 5-phospho-alpha-D-ribose 1-diphosphate: step 3/9. Functionally, catalyzes the hydrolysis of the adenine ring of phosphoribosyl-AMP. This chain is Phosphoribosyl-AMP cyclohydrolase, found in Brucella canis (strain ATCC 23365 / NCTC 10854 / RM-666).